The chain runs to 35 residues: Mu-thomitoxin-Hme1c (35 aa).

3 cysteine pairs are disulfide-bonded: C2–C18, C9–C23, and C17–C34.

The protein belongs to the neurotoxin 07 (Beta/delta-agtx) family. As to expression, expressed by the venom gland.

The protein localises to the secreted. Its function is as follows. Gating-modifier toxin that inhibits mammalian and insect voltage-gated sodium channels. It shifts the voltage dependence of channel activation to more positive voltages. It shows potent activity on Nav1.4/SCN4A (IC(50)=103 nM), Nav1.5/SCN5A (IC(50)=268 nM) and Para/DmNav1 (IC(50)=555 nM) and lower activities on Nav1.2/SCN2A (IC(50)=1447 nM) and Nav1.6/SCN8A (IC(50)=3504 nM). In addition, at a concentration of 1 uM, the toxin inhibits 90-100% of sodium current through Nav1.2/SCN2A, Nav1.4/SCN4A, Nav1.5/SCN5A, Nav1.6/SCN8A and Para/DmNav1 channels, when the voltage of maximal activation of the channel in control conditions is applied. It binds to the S3-S4 helix-loop-helix motif in the voltage-sensing domain of repeat 1 (shown on hNav1.4/SCN4A). The toxin is amphiphilic and binds to both neutral and negatively charged lipid vesicles with high affinity. The hydrophobic face lies on the opposite side to the hydrophobic faces of classical gating modifiers. The protein is Mu-thomitoxin-Hme1c of Heriaeus mellotteei (Crab spider).